We begin with the raw amino-acid sequence, 729 residues long: Neurochondrin (729 aa).

Ser2 bears the N-acetylserine mark. Position 2 is a phosphoserine (Ser2). Residues Cys3 and Cys4 are each lipidated (S-palmitoyl cysteine). The residue at position 75 (Arg75) is an Asymmetric dimethylarginine. Ser448 is subject to Phosphoserine.

Belongs to the neurochondrin family. As to quaternary structure, interacts with MCHR1. Interacts with SEMA4C. Interacts with DIAPH1 (via FH3 domain). Interacts with GRM5. In terms of processing, palmitoylated. Palmitoylation by ZDHHC1, ZDHHC3 and ZDHHC11 regulates the association of NCDN with endosome membranes. May also be palmitoylated by ZDHHC7.

The protein resides in the cytoplasm. Its subcellular location is the cytosol. It is found in the endosome membrane. It localises to the cell projection. The protein localises to the dendrite. The protein resides in the postsynapse. Probably involved in signal transduction, in the nervous system, via increasing cell surface localization of GRM5 and positively regulating its signaling. Required for the spatial learning process. Acts as a negative regulator of Ca(2+)-calmodulin-dependent protein kinase 2 (CaMK2) phosphorylation. May play a role in modulating melanin-concentrating hormone-mediated functions via its interaction with MCHR1 that interferes with G protein-coupled signal transduction. May be involved in bone metabolism. May also be involved in neurite outgrowth. This Bos taurus (Bovine) protein is Neurochondrin (NCDN).